The sequence spans 388 residues: Acetate kinase (388 aa).

Mg(2+) is bound at residue N8. Residue K15 coordinates ATP. R88 is a substrate binding site. D144 functions as the Proton donor/acceptor in the catalytic mechanism. Residues H202 to G206, D276 to R278, and G321 to N325 contribute to the ATP site. E375 contacts Mg(2+).

It belongs to the acetokinase family. As to quaternary structure, homodimer. Requires Mg(2+) as cofactor. Mn(2+) serves as cofactor.

Its subcellular location is the cytoplasm. The catalysed reaction is acetate + ATP = acetyl phosphate + ADP. The protein operates within metabolic intermediate biosynthesis; acetyl-CoA biosynthesis; acetyl-CoA from acetate: step 1/2. Its function is as follows. Catalyzes the formation of acetyl phosphate from acetate and ATP. Can also catalyze the reverse reaction. The sequence is that of Acetate kinase from Mycoplasmoides gallisepticum (strain R(low / passage 15 / clone 2)) (Mycoplasma gallisepticum).